Here is a 315-residue protein sequence, read N- to C-terminus: uncharacterized protein (315 aa).

It belongs to the asfivirus C315R family.

This is an uncharacterized protein from Ornithodoros (relapsing fever ticks).